The chain runs to 145 residues: Ribosome-binding factor A (145 aa).

The span at 1-10 (MKRPSSHGRR) shows a compositional bias: basic residues. Disordered regions lie at residues 1–21 (MKRPSSHGRRPPQGPSQRQLR) and 124–145 (DDPKVRQDLTPQPPSDSWKDED).

The protein belongs to the RbfA family. Monomer. Binds 30S ribosomal subunits, but not 50S ribosomal subunits or 70S ribosomes.

The protein localises to the cytoplasm. Functionally, one of several proteins that assist in the late maturation steps of the functional core of the 30S ribosomal subunit. Associates with free 30S ribosomal subunits (but not with 30S subunits that are part of 70S ribosomes or polysomes). Required for efficient processing of 16S rRNA. May interact with the 5'-terminal helix region of 16S rRNA. The sequence is that of Ribosome-binding factor A from Phenylobacterium zucineum (strain HLK1).